We begin with the raw amino-acid sequence, 607 residues long: Albumin B (607 aa).

The first 18 residues, methionine 1–serine 18, serve as a signal peptide directing secretion. Positions arginine 19 to arginine 24 are excised as a propeptide. 3 consecutive Albumin domains span residues phenylalanine 22 to methionine 209, lysine 210 to asparagine 402, and glutamate 403 to glutamate 600. Histidine 30 is a binding site for Cu cation. Disulfide bonds link cysteine 80–cysteine 88, cysteine 101–cysteine 117, cysteine 116–cysteine 127, cysteine 147–cysteine 192, cysteine 191–cysteine 200, cysteine 223–cysteine 269, cysteine 268–cysteine 276, cysteine 288–cysteine 302, cysteine 301–cysteine 312, cysteine 339–cysteine 384, cysteine 383–cysteine 392, cysteine 415–cysteine 461, cysteine 460–cysteine 471, cysteine 484–cysteine 500, cysteine 499–cysteine 510, cysteine 537–cysteine 582, and cysteine 581–cysteine 590.

Belongs to the ALB/AFP/VDB family. Plasma.

It localises to the secreted. In terms of biological role, serum albumin, the main protein of plasma, has a good binding capacity for water, Ca(2+), Na(+), K(+), fatty acids, hormones, bilirubin and drugs. Its main function is the regulation of the colloidal osmotic pressure of blood. The chain is Albumin B (alb-b) from Xenopus laevis (African clawed frog).